A 203-amino-acid chain; its full sequence is Thymidylate kinase (203 aa).

14 to 21 contributes to the ATP binding site; it reads GGEGIGKS.

This sequence belongs to the thymidylate kinase family.

The enzyme catalyses dTMP + ATP = dTDP + ADP. Its function is as follows. Phosphorylation of dTMP to form dTDP in both de novo and salvage pathways of dTTP synthesis. The polypeptide is Thymidylate kinase (Rickettsia peacockii (strain Rustic)).